Consider the following 116-residue polypeptide: Spexin (116 aa).

An N-terminal signal peptide occupies residues 1 to 26 (MKGPSVLAVTAVVLLLVLSALENSSG). The propeptide occupies 27–35 (APQRLSEKR). Residue Q49 is modified to Glutamine amide. Propeptides lie at residues 50–116 (GRRF…LFNW) and 74–116 (PDLE…LFNW). The tract at residues 52 to 77 (RFLSDQSRRKELADRPPPERRNPDLE) is disordered. Over residues 53-75 (FLSDQSRRKELADRPPPERRNPD) the composition is skewed to basic and acidic residues.

It belongs to the spexin family.

It is found in the secreted. Its subcellular location is the extracellular space. The protein resides in the cytoplasmic vesicle. It localises to the secretory vesicle. In terms of biological role, plays a role as a central modulator of cardiovascular and renal function and nociception. Also plays a role in energy metabolism and storage. Inhibits adrenocortical cell proliferation with minor stimulation on corticosteroid release. Functionally, acts as a ligand for galanin receptors GALR2 and GALR3. Intracerebroventricular administration of the peptide induces an increase in arterial blood pressure, a decrease in both heart rate and renal excretion and delayed natriuresis. Intraventricular administration of the peptide induces antinociceptive activity. Also induces contraction of muscarinic-like stomach smooth muscles. Intraperitoneal administration of the peptide induces a reduction in food consumption and body weight. Inhibits long chain fatty acid uptake into adipocytes. Intracerebroventricular administration of the peptide induces a decrease in heart rate, but no change in arterial pressure, and an increase in urine flow rate. Intraventricular administration of the peptide induces antinociceptive activity. The polypeptide is Spexin (Spx) (Mus musculus (Mouse)).